A 732-amino-acid chain; its full sequence is 1,4-alpha-glucan branching enzyme GlgB (732 aa).

D412 acts as the Nucleophile in catalysis. The active-site Proton donor is E465.

It belongs to the glycosyl hydrolase 13 family. GlgB subfamily. As to quaternary structure, monomer.

It carries out the reaction Transfers a segment of a (1-&gt;4)-alpha-D-glucan chain to a primary hydroxy group in a similar glucan chain.. Its pathway is glycan biosynthesis; glycogen biosynthesis. Its function is as follows. Catalyzes the formation of the alpha-1,6-glucosidic linkages in glycogen by scission of a 1,4-alpha-linked oligosaccharide from growing alpha-1,4-glucan chains and the subsequent attachment of the oligosaccharide to the alpha-1,6 position. This Pseudomonas aeruginosa (strain ATCC 15692 / DSM 22644 / CIP 104116 / JCM 14847 / LMG 12228 / 1C / PRS 101 / PAO1) protein is 1,4-alpha-glucan branching enzyme GlgB.